The sequence spans 261 residues: Early 31 kDa protein (261 aa).

The tract at residues Ile230–Gln261 is disordered. Residues Asp236–Gln261 are compositionally biased toward acidic residues.

The chain is Early 31 kDa protein from Frog virus 3 (isolate Goorha) (FV-3).